Here is a 356-residue protein sequence, read N- to C-terminus: Butyrate kinase (356 aa).

This sequence belongs to the acetokinase family.

The protein localises to the cytoplasm. It carries out the reaction butanoate + ATP = butanoyl phosphate + ADP. It participates in lipid metabolism; butanoate metabolism. Functionally, catalyzes the conversion of butyryl-CoA through butyryl phosphate to butyrate. This chain is Butyrate kinase, found in Clostridium tetani (strain Massachusetts / E88).